Here is a 298-residue protein sequence, read N- to C-terminus: Inosose dehydratase (298 aa).

Belongs to the IolE/MocC family. Glutathione serves as cofactor. It depends on Co(2+) as a cofactor. The cofactor is Mn(2+).

The enzyme catalyses scyllo-inosose = 3D-3,5/4-trihydroxycyclohexane-1,2-dione + H2O. The protein operates within polyol metabolism; myo-inositol degradation into acetyl-CoA; acetyl-CoA from myo-inositol: step 2/7. Catalyzes the dehydration of inosose (2-keto-myo-inositol, 2KMI or 2,4,6/3,5-pentahydroxycyclohexanone) to 3D-(3,5/4)-trihydroxycyclohexane-1,2-dione (D-2,3-diketo-4-deoxy-epi-inositol). This is Inosose dehydratase from Geobacillus thermodenitrificans (strain NG80-2).